The sequence spans 86 residues: Centromere protein W (86 aa).

This sequence belongs to the CENP-W/WIP1 family. In terms of assembly, heterodimer with CENPT; this dimer coassembles with CENPS-CENPX heterodimers at centromeres to form the tetrameric CENP-T-W-S-X complex, which is a subcomplex of the large constitutive centromere-associated network (CCAN, also known as the interphase centromere complex or ICEN). Interacts with NPM1.

It is found in the nucleus. The protein resides in the chromosome. It localises to the centromere. Its subcellular location is the kinetochore. The protein localises to the nucleus matrix. It is found in the nucleolus. Component of the CENPA-NAC (nucleosome-associated) complex, a complex that plays a central role in assembly of kinetochore proteins, mitotic progression and chromosome segregation. The CENPA-NAC complex recruits the CENPA-CAD (nucleosome distal) complex and may be involved in incorporation of newly synthesized CENPA into centromeres. Part of a nucleosome-associated complex that binds specifically to histone H3-containing nucleosomes at the centromere, as opposed to nucleosomes containing CENPA. Component of the heterotetrameric CENP-T-W-S-X complex that binds and supercoils DNA, and plays an important role in kinetochore assembly. CENPW has a fundamental role in kinetochore assembly and function. It is one of the inner kinetochore proteins, with most further proteins binding downstream. Required for normal chromosome organization and normal progress through mitosis. The protein is Centromere protein W (Cenpw) of Mus musculus (Mouse).